The primary structure comprises 337 residues: Inositol 2-dehydrogenase (337 aa).

It belongs to the Gfo/Idh/MocA family. Homotetramer.

The catalysed reaction is myo-inositol + NAD(+) = scyllo-inosose + NADH + H(+). Its function is as follows. Involved in the oxidation of myo-inositol (MI) to 2-keto-myo-inositol (2KMI or 2-inosose). This is Inositol 2-dehydrogenase from Burkholderia vietnamiensis (strain G4 / LMG 22486) (Burkholderia cepacia (strain R1808)).